We begin with the raw amino-acid sequence, 1679 residues long: Furin-like protease 2 (1679 aa).

Residues 1–10 (MSNTTRSSRV) are compositionally biased toward polar residues. Residues 1–42 (MSNTTRSSRVTIGRIGTTPQITDPWSSGLEKQRPSRCGGPKS) are disordered. Residues Asn-3, Asn-109, and Asn-130 are each glycosylated (N-linked (GlcNAc...) asparagine). The tract at residues 139–164 (VSSLHSSRRTNPPSSSSSSSSNVDVD) is disordered. A compositionally biased stretch (low complexity) spans 147–160 (RTNPPSSSSSSSSN). The N-linked (GlcNAc...) asparagine glycan is linked to Asn-205. In terms of domain architecture, Peptidase S8 spans 383 to 705 (QWYLNGGAKD…YGLMDAGAMV (323 aa)). Residue Asp-417 is the Charge relay system of the active site. A disordered region spans residues 424–456 (HPDLAQNYDPEASFDINGNDSDPTPQDNGDNKH). A compositionally biased stretch (polar residues) spans 439-451 (INGNDSDPTPQDN). The N-linked (GlcNAc...) asparagine glycan is linked to Asn-442. His-456 functions as the Charge relay system in the catalytic mechanism. Cystine bridges form between Cys-473–Cys-629 and Cys-565–Cys-595. The N-linked (GlcNAc...) asparagine glycan is linked to Asn-480. The active-site Charge relay system is the Ser-637. One can recognise a P/Homo B domain in the interval 714–852 (VPPQHICKSR…QLIFYGTSTQ (139 aa)). A disulfide bridge connects residues Cys-720 and Cys-748. The N-linked (GlcNAc...) asparagine glycan is linked to Asn-927. FU repeat units lie at residues 961–1006 (KKIL…RSFP), 1009–1056 (VGIC…GYFE), 1060–1104 (NRTC…DTYE), 1107–1152 (DNKC…GFYA), 1156–1204 (RLEC…SEFY), 1208–1253 (EGQC…GFFV), 1256–1299 (GSLC…GYYS), 1301–1346 (RGIC…GFYK), 1348–1393 (DFGC…QYYD), and 1396–1443 (SATC…QTLA). Asn-1060 is a glycosylation site (N-linked (GlcNAc...) asparagine). N-linked (GlcNAc...) asparagine glycosylation is present at Asn-1181. 2 N-linked (GlcNAc...) asparagine glycosylation sites follow: Asn-1274 and Asn-1277. A glycan (N-linked (GlcNAc...) asparagine) is linked at Asn-1439. A helical transmembrane segment spans residues 1512–1532 (AIAVAICLLIITIFSIIFAVL). Topologically, residues 1533-1679 (QRNSNHVSRN…STTSRTNIRS (147 aa)) are cytoplasmic. Positions 1660–1679 (TNAERKNHPSSTTSRTNIRS) are disordered. Over residues 1668-1679 (PSSTTSRTNIRS) the composition is skewed to polar residues.

This sequence belongs to the peptidase S8 family. Furin subfamily. The cofactor is Ca(2+). As to expression, transient expression in a subset of central nervous system neurons during embryonic stages 12-13. Expression in developing tracheal tree from stage 13 to end of embryonic development.

Its subcellular location is the membrane. The enzyme catalyses Release of mature proteins from their proproteins by cleavage of -Arg-Xaa-Yaa-Arg-|-Zaa- bonds, where Xaa can be any amino acid and Yaa is Arg or Lys. Releases albumin, complement component C3 and von Willebrand factor from their respective precursors.. Functionally, furin is likely to represent the ubiquitous endoprotease activity within constitutive secretory pathways and capable of cleavage at the RX(K/R)R consensus motif. The protein is Furin-like protease 2 (Fur2) of Drosophila melanogaster (Fruit fly).